A 338-amino-acid polypeptide reads, in one-letter code: Phenylalanine--tRNA ligase alpha subunit (338 aa).

Position 253 (E253) interacts with Mg(2+).

It belongs to the class-II aminoacyl-tRNA synthetase family. Phe-tRNA synthetase alpha subunit type 1 subfamily. In terms of assembly, tetramer of two alpha and two beta subunits. Mg(2+) is required as a cofactor.

The protein localises to the cytoplasm. The enzyme catalyses tRNA(Phe) + L-phenylalanine + ATP = L-phenylalanyl-tRNA(Phe) + AMP + diphosphate + H(+). This chain is Phenylalanine--tRNA ligase alpha subunit, found in Trichlorobacter lovleyi (strain ATCC BAA-1151 / DSM 17278 / SZ) (Geobacter lovleyi).